A 295-amino-acid chain; its full sequence is 4-diphosphocytidyl-2-C-methyl-D-erythritol kinase (295 aa).

Residue K10 is part of the active site. 97–107 (PIGSGLGGASS) is an ATP binding site. D139 is an active-site residue.

This sequence belongs to the GHMP kinase family. IspE subfamily. Homodimer.

It catalyses the reaction 4-CDP-2-C-methyl-D-erythritol + ATP = 4-CDP-2-C-methyl-D-erythritol 2-phosphate + ADP + H(+). It participates in isoprenoid biosynthesis; isopentenyl diphosphate biosynthesis via DXP pathway; isopentenyl diphosphate from 1-deoxy-D-xylulose 5-phosphate: step 3/6. Its function is as follows. Catalyzes the phosphorylation of the position 2 hydroxy group of 4-diphosphocytidyl-2C-methyl-D-erythritol. The polypeptide is 4-diphosphocytidyl-2-C-methyl-D-erythritol kinase (Blochmanniella pennsylvanica (strain BPEN)).